The chain runs to 78 residues: Large ribosomal subunit protein bL28 (78 aa).

This sequence belongs to the bacterial ribosomal protein bL28 family.

This Prochlorococcus marinus (strain MIT 9515) protein is Large ribosomal subunit protein bL28.